The primary structure comprises 183 residues: Macro domain-containing protein (183 aa).

Residues 1 to 174 enclose the Macro domain; the sequence is MKKVHLIQAD…IYKNILSNID (174 aa).

The protein belongs to the MacroD-type family.

This is Macro domain-containing protein from Acinetobacter sp. (strain ED45-25).